A 389-amino-acid polypeptide reads, in one-letter code: Teichoic acid glycerol-phosphate transferase (389 aa).

It belongs to the CDP-glycerol glycerophosphotransferase family.

The protein localises to the cell membrane. The catalysed reaction is 4-O-[(2R)-glycerylphospho]-N-acetyl-beta-D-mannosaminyl-(1-&gt;4)-N-acetyl-alpha-D-glucosaminyl di-trans,octa-cis-undecaprenyl diphosphate + CDP-glycerol = 4-O-[di(2R)-glycerylphospho]-N-acetyl-beta-D-mannosaminyl-(1-&gt;4)-N-acetyl-alpha-D-glucosaminyl di-trans,octa-cis-undecaprenyl diphosphate + CMP + H(+). Its pathway is cell wall biogenesis; poly(ribitol phosphate) teichoic acid biosynthesis. In terms of biological role, catalyzes the addition of a second glycerol phosphate unit from CDP-glycerol to the prenolpyrophosphate-linked disaccharide, to complete the linkage unit. The polypeptide is Teichoic acid glycerol-phosphate transferase (tarF) (Staphylococcus aureus (strain NCTC 8325 / PS 47)).